A 457-amino-acid polypeptide reads, in one-letter code: Cysteine--tRNA ligase (457 aa).

Cys-28 is a binding site for Zn(2+). A 'HIGH' region motif is present at residues 30–40; it reads ITVYDLCHIGH. Residues Cys-209, His-234, and Glu-238 each coordinate Zn(2+). Positions 266-270 match the 'KMSKS' region motif; it reads KMSKS. Lys-269 is an ATP binding site.

Belongs to the class-I aminoacyl-tRNA synthetase family. Monomer. Requires Zn(2+) as cofactor.

The protein localises to the cytoplasm. The enzyme catalyses tRNA(Cys) + L-cysteine + ATP = L-cysteinyl-tRNA(Cys) + AMP + diphosphate. The protein is Cysteine--tRNA ligase of Sodalis glossinidius (strain morsitans).